The following is a 360-amino-acid chain: Photosystem II protein D1 2 (360 aa).

Transmembrane regions (helical) follow at residues 29–46 (YIGW…TAVT), 118–133 (HYMI…QWEY), and 142–156 (WICV…ATYS). Histidine 118 provides a ligand contact to chlorophyll a. Residue tyrosine 126 coordinates pheophytin a. [CaMn4O5] cluster contacts are provided by aspartate 170 and glutamate 189. Residues 197–218 (FHMFGVAGVLGGSLFAAMHGSL) form a helical membrane-spanning segment. Residue histidine 198 coordinates chlorophyll a. A quinone-binding positions include histidine 215 and 264-265 (SF). A Fe cation-binding site is contributed by histidine 215. Histidine 272 provides a ligand contact to Fe cation. Residues 274–288 (FLGAWPVVCIWLTAM) form a helical membrane-spanning segment. Histidine 332, glutamate 333, aspartate 342, and alanine 344 together coordinate [CaMn4O5] cluster. Residues 345–360 (AGESAPVALTAPVING) constitute a propeptide that is removed on maturation.

The protein belongs to the reaction center PufL/M/PsbA/D family. In terms of assembly, PSII is composed of 1 copy each of membrane proteins PsbA, PsbB, PsbC, PsbD, PsbE, PsbF, PsbH, PsbI, PsbJ, PsbK, PsbL, PsbM, PsbT, PsbX, PsbY, PsbZ, Psb30/Ycf12, peripheral proteins PsbO, CyanoQ (PsbQ), PsbU, PsbV and a large number of cofactors. It forms dimeric complexes. The D1/D2 heterodimer binds P680, chlorophylls that are the primary electron donor of PSII, and subsequent electron acceptors. It shares a non-heme iron and each subunit binds pheophytin, quinone, additional chlorophylls, carotenoids and lipids. D1 provides most of the ligands for the Mn4-Ca-O5 cluster of the oxygen-evolving complex (OEC). There is also a Cl(-1) ion associated with D1 and D2, which is required for oxygen evolution. The PSII complex binds additional chlorophylls, carotenoids and specific lipids. serves as cofactor. Post-translationally, tyr-161 forms a radical intermediate that is referred to as redox-active TyrZ, YZ or Y-Z. In terms of processing, C-terminally processed by CtpA; processing is essential to allow assembly of the oxygen-evolving complex and thus photosynthetic growth.

Its subcellular location is the cellular thylakoid membrane. It carries out the reaction 2 a plastoquinone + 4 hnu + 2 H2O = 2 a plastoquinol + O2. Functionally, photosystem II (PSII) is a light-driven water:plastoquinone oxidoreductase that uses light energy to abstract electrons from H(2)O, generating O(2) and a proton gradient subsequently used for ATP formation. It consists of a core antenna complex that captures photons, and an electron transfer chain that converts photonic excitation into a charge separation. The D1/D2 (PsbA/PsbD) reaction center heterodimer binds P680, the primary electron donor of PSII as well as several subsequent electron acceptors. The polypeptide is Photosystem II protein D1 2 (Acaryochloris marina (strain MBIC 11017)).